A 43-amino-acid chain; its full sequence is Defensin (43 aa).

Disulfide bonds link C3-C34, C20-C39, and C24-C41.

It belongs to the invertebrate defensin family. Type 1 subfamily.

The protein localises to the secreted. Its function is as follows. Antibacterial peptide. Affects Gram-positive bacteria M.luteus, B.megaterium, A.viridans, S.aureus and S.saprophyticus. Moderate activity against P.acidilactici and B.subtilis QB935. Also affects Gram-negative bacterium, D22 form of E.coli. This is Defensin from Pyrrhocoris apterus (Sap sucking bug).